Consider the following 97-residue polypeptide: Co-chaperonin GroES (97 aa).

The protein belongs to the GroES chaperonin family. As to quaternary structure, heptamer of 7 subunits arranged in a ring. Interacts with the chaperonin GroEL.

The protein resides in the cytoplasm. Functionally, together with the chaperonin GroEL, plays an essential role in assisting protein folding. The GroEL-GroES system forms a nano-cage that allows encapsulation of the non-native substrate proteins and provides a physical environment optimized to promote and accelerate protein folding. GroES binds to the apical surface of the GroEL ring, thereby capping the opening of the GroEL channel. This is Co-chaperonin GroES from Pseudomonas fluorescens (strain Pf0-1).